A 103-amino-acid chain; its full sequence is Protamine-3 (103 aa).

The segment at 1–103 (MGSRCAKLNT…QSPEPKRTPS (103 aa)) is disordered. The segment covering 10–21 (TGQSPGHSPGHS) has biased composition (low complexity). Positions 50 to 66 (GEEEEEEEEEGEEEEKE) are enriched in acidic residues. A compositionally biased stretch (basic and acidic residues) spans 78-90 (EPERQEEGHKDNA). Ser95 carries the post-translational modification Phosphoserine.

The protein belongs to the protamine P3 family.

The protein resides in the nucleus. The protein localises to the chromosome. Its function is as follows. Protamines substitute for histones in the chromatin of sperm during the haploid phase of spermatogenesis. They compact sperm DNA into a highly condensed, stable and inactive complex. This is Protamine-3 (PRM3) from Homo sapiens (Human).